Consider the following 1030-residue polypeptide: Subtilin biosynthesis protein SpaB (1030 aa).

The protein to S.epidermidis EpiB and L.lactis NisB.

Its subcellular location is the cell membrane. Functionally, involved in the post-translational modification of the lantibiotic subtilin. This Bacillus subtilis protein is Subtilin biosynthesis protein SpaB (spaB).